We begin with the raw amino-acid sequence, 419 residues long: Ribosome biogenesis protein NOP53 (419 aa).

Disordered stretches follow at residues 1 to 21 (MGIK…KNKR) and 233 to 283 (KAFE…KIRQ). Residues 233–261 (KAFEDKGLVSDQDVNHSIDSDDQSEHEQA) are compositionally biased toward basic and acidic residues. 4 positions are modified to phosphoserine: S242, S249, S252, and S256. Residues 269 to 283 (KNKRKTRSQRNKIRQ) show a composition bias toward basic residues.

Belongs to the NOP53 family.

It localises to the nucleus. The protein localises to the nucleolus. It is found in the nucleoplasm. May play a role in ribosome biogenesis. The sequence is that of Ribosome biogenesis protein NOP53 from Schizosaccharomyces pombe (strain 972 / ATCC 24843) (Fission yeast).